Reading from the N-terminus, the 307-residue chain is Leucine-rich repeat-containing protein 59 (307 aa).

Residues 1 to 247 are Cytoplasmic-facing; it reads MARANGRSQN…LAQRQSRLRK (247 aa). LRR repeat units lie at residues 10 to 31, 40 to 61, 63 to 84, 86 to 107, and 109 to 131; these read NLRDKLDGNELDLSLSDLSEVP, KATALDLSCNKLTTLPDDFCNL, HIVRLDLSKNQIVQLPSEFGRL, NLQHLDLLQNHLMSLPVSFAQL, and SLKWLDLKDNPLKPDLAKVAGDC. The stretch at 156-222 forms a coiled coil; that stretch reads EIELQRKLQL…LNSNKKAEEE (67 aa). The interval 170–238 is disordered; the sequence is KKKLEAKQRV…RMATPKEKKL (69 aa). Composition is skewed to basic and acidic residues over residues 174–187 and 194–238; these read EAKQRVKEEQEREM and QQKE…EKKL. Residues 248–268 traverse the membrane as a helical segment; the sequence is IACILLFGLLVVLLVVVACRF. Topologically, residues 269–307 are lumenal; that stretch reads TDLKAINMCTSVNAIYKETLSALHSNPVLERFLQDPSSQ.

As to quaternary structure, interacts with SGO1.

Its subcellular location is the microsome membrane. The protein localises to the endoplasmic reticulum membrane. It is found in the nucleus envelope. In terms of biological role, required for nuclear import of FGF1. This Xenopus laevis (African clawed frog) protein is Leucine-rich repeat-containing protein 59 (lrrc59).